The primary structure comprises 681 residues: DNA-directed RNA polymerase subunit beta' (681 aa).

Zn(2+) is bound by residues Cys69, Cys71, Cys87, and Cys90. 3 residues coordinate Mg(2+): Asp489, Asp491, and Asp493.

The protein belongs to the RNA polymerase beta' chain family. RpoC1 subfamily. As to quaternary structure, in plastids the minimal PEP RNA polymerase catalytic core is composed of four subunits: alpha, beta, beta', and beta''. When a (nuclear-encoded) sigma factor is associated with the core the holoenzyme is formed, which can initiate transcription. Mg(2+) is required as a cofactor. The cofactor is Zn(2+).

It localises to the plastid. The protein localises to the chloroplast. It carries out the reaction RNA(n) + a ribonucleoside 5'-triphosphate = RNA(n+1) + diphosphate. Functionally, DNA-dependent RNA polymerase catalyzes the transcription of DNA into RNA using the four ribonucleoside triphosphates as substrates. The polypeptide is DNA-directed RNA polymerase subunit beta' (Anthoceros angustus (Hornwort)).